The sequence spans 396 residues: MPTDFLFTSESVTEGHPDKIADQISDGVLDAIIAKDPQARVAVETLVKTGLAIVAGEVTTNCYVDIPKLVRSTICRIGYTDSSMGYDGNTCGVMVAIEGQSQDIARGVDNKKDQGAGDQGMMFGFACDETPELMPAPIHYAHAITRRLADVRRKQHPWIRPDGKSQVTVEYRDGRPARIDAVVVSTQHSDEVSNKKIQEAIREDVIANALPKKLIDNKTKFFINPTGRLVAGGPMGDSGLTGRKIIVDTYGGMGRHGGGAFSGKDPSKVDRSAAYMGRHIAKTVVAAGLARRCEVQVSYAIGVAEPVSVMVETFGTATVPEERIALAVRKTFGLRPREITEYLNLLRPIYQKTAAYGHFGRTEKEFTWERVEEKKDALRDAAKSATPSGGRRLKAV.

Histidine 16 lines the ATP pocket. Mg(2+) is bound at residue aspartate 18. Glutamate 44 provides a ligand contact to K(+). Glutamate 57 and glutamine 100 together coordinate L-methionine. The tract at residues 100–110 is flexible loop; the sequence is QSQDIARGVDN. ATP contacts are provided by residues 162–164, aspartate 237, 243–244, alanine 260, and lysine 264; these read DGK and RK. Aspartate 237 contributes to the L-methionine binding site. Residue lysine 268 participates in L-methionine binding.

It belongs to the AdoMet synthase family. In terms of assembly, homotetramer; dimer of dimers. Requires Mg(2+) as cofactor. K(+) serves as cofactor.

The protein resides in the cytoplasm. The enzyme catalyses L-methionine + ATP + H2O = S-adenosyl-L-methionine + phosphate + diphosphate. Its pathway is amino-acid biosynthesis; S-adenosyl-L-methionine biosynthesis; S-adenosyl-L-methionine from L-methionine: step 1/1. In terms of biological role, catalyzes the formation of S-adenosylmethionine (AdoMet) from methionine and ATP. The overall synthetic reaction is composed of two sequential steps, AdoMet formation and the subsequent tripolyphosphate hydrolysis which occurs prior to release of AdoMet from the enzyme. This chain is S-adenosylmethionine synthase, found in Myxococcus xanthus.